Reading from the N-terminus, the 355-residue chain is DNA polymerase IV (355 aa).

Positions 4 to 185 (IIHVDMDCFY…LPLKKIPGVG (182 aa)) constitute a UmuC domain. 2 residues coordinate Mg(2+): Asp8 and Asp103. Glu104 is an active-site residue.

Belongs to the DNA polymerase type-Y family. As to quaternary structure, monomer. Mg(2+) is required as a cofactor.

It localises to the cytoplasm. It carries out the reaction DNA(n) + a 2'-deoxyribonucleoside 5'-triphosphate = DNA(n+1) + diphosphate. Functionally, poorly processive, error-prone DNA polymerase involved in untargeted mutagenesis. Copies undamaged DNA at stalled replication forks, which arise in vivo from mismatched or misaligned primer ends. These misaligned primers can be extended by PolIV. Exhibits no 3'-5' exonuclease (proofreading) activity. May be involved in translesional synthesis, in conjunction with the beta clamp from PolIII. In Pasteurella multocida (strain Pm70), this protein is DNA polymerase IV.